We begin with the raw amino-acid sequence, 247 residues long: PF03932 family protein CutC (247 aa).

Belongs to the CutC family.

Its subcellular location is the cytoplasm. This Klebsiella pneumoniae (strain 342) protein is PF03932 family protein CutC.